The chain runs to 440 residues: Probable exopolygalacturonase C (440 aa).

Residues 1–21 (MLITNPALLGILASLAPLALG) form the signal peptide. Residues Asn24, Asn84, Asn151, and Asn219 are each glycosylated (N-linked (GlcNAc...) asparagine). PbH1 repeat units follow at residues 217–238 (GTNISITDSVMYNGDDAIAVNT) and 240–261 (SHNIVFARNTIGYQSHGMSIGS). Asp231 (proton donor) is an active-site residue. The active site involves His255. N-linked (GlcNAc...) asparagine glycosylation occurs at Asn271. Residues 272-293 (ITNLRFEDVTVIDALYAARFKS) form a PbH1 3 repeat. Residues Asn313 and Asn350 are each glycosylated (N-linked (GlcNAc...) asparagine). Cysteines 389 and 395 form a disulfide. Asn434 is a glycosylation site (N-linked (GlcNAc...) asparagine).

Belongs to the glycosyl hydrolase 28 family.

The protein localises to the secreted. The enzyme catalyses [(1-&gt;4)-alpha-D-galacturonosyl](n) + H2O = alpha-D-galacturonate + [(1-&gt;4)-alpha-D-galacturonosyl](n-1). Functionally, specific in hydrolyzing the terminal glycosidic bond of polygalacturonic acid and oligogalacturonates. The chain is Probable exopolygalacturonase C (pgxC) from Neosartorya fischeri (strain ATCC 1020 / DSM 3700 / CBS 544.65 / FGSC A1164 / JCM 1740 / NRRL 181 / WB 181) (Aspergillus fischerianus).